Reading from the N-terminus, the 447-residue chain is Trigger factor (447 aa).

Residues 164-249 (GNQVTFDFEG…VKLVEKSKLP (86 aa)) form the PPIase FKBP-type domain.

It belongs to the FKBP-type PPIase family. Tig subfamily.

The protein localises to the cytoplasm. It catalyses the reaction [protein]-peptidylproline (omega=180) = [protein]-peptidylproline (omega=0). Functionally, involved in protein export. Acts as a chaperone by maintaining the newly synthesized protein in an open conformation. Functions as a peptidyl-prolyl cis-trans isomerase. The chain is Trigger factor from Psychrobacter arcticus (strain DSM 17307 / VKM B-2377 / 273-4).